A 290-amino-acid polypeptide reads, in one-letter code: MVIQKEKKSCGQVVEEWKEFVWNPRTHQFMGRTGTSWAFILLFYLVFYGFLTAMFSLTMWVMLQTVSDHTPKYQDRLATPGLMIRPKTENLDVIVNISDTESWGQHVQKLNKFLEPYNDSIQAQKNDVCRPGRYYEQPDNGVLNYPKRACQFNRTQLGDCSGIGDPTHYGYSTGQPCVFIKMNRVINFYAGANQSMNVTCVGKRDEDAENLGHFVMFPANGSIDLMYFPYYGKKFHVNYTQPLVAVKFLNVTPNVEVNVECRINAANIATDDERDKFAGRVAFKLRINKT.

Topologically, residues 1 to 39 (MVIQKEKKSCGQVVEEWKEFVWNPRTHQFMGRTGTSWAF) are cytoplasmic. Residues 40–67 (ILLFYLVFYGFLTAMFSLTMWVMLQTVS) form a helical; Signal-anchor for type II membrane protein membrane-spanning segment. The Extracellular segment spans residues 68 to 290 (DHTPKYQDRL…VAFKLRINKT (223 aa)). 2 N-linked (GlcNAc...) asparagine glycosylation sites follow: N96 and N118. A disulfide bond links C129 and C150. N153 carries an N-linked (GlcNAc...) asparagine glycan. The cysteines at positions 160 and 177 are disulfide-linked. Residues N193, N197, N220, and N238 are each glycosylated (N-linked (GlcNAc...) asparagine). Positions 193–290 (NQSMNVTCVG…VAFKLRINKT (98 aa)) are immunoglobulin-like. An intrachain disulfide couples C200 to C261.

The protein belongs to the X(+)/potassium ATPases subunit beta family. In terms of assembly, the sodium/potassium-transporting ATPase is composed of a catalytic alpha subunit, an auxiliary non-catalytic beta subunit and an additional regulatory subunit. Interacts with isoform 2 of BSG.

It is found in the cell membrane. Functionally, this is the non-catalytic component of the active enzyme, which catalyzes the hydrolysis of ATP coupled with the exchange of Na(+) and K(+) ions across the plasma membrane. The exact function of the beta-2 subunit is not known. Mediates cell adhesion of neurons and astrocytes, and promotes neurite outgrowth. In Mus musculus (Mouse), this protein is Sodium/potassium-transporting ATPase subunit beta-2 (Atp1b2).